A 631-amino-acid chain; its full sequence is 1-deoxy-D-xylulose-5-phosphate synthase (631 aa).

Residues H72 and G113–A115 each bind thiamine diphosphate. D144 is a Mg(2+) binding site. Thiamine diphosphate is bound by residues G145–A146, N174, Y287, and E370. Position 174 (N174) interacts with Mg(2+).

This sequence belongs to the transketolase family. DXPS subfamily. As to quaternary structure, homodimer. The cofactor is Mg(2+). Thiamine diphosphate is required as a cofactor.

It catalyses the reaction D-glyceraldehyde 3-phosphate + pyruvate + H(+) = 1-deoxy-D-xylulose 5-phosphate + CO2. It functions in the pathway metabolic intermediate biosynthesis; 1-deoxy-D-xylulose 5-phosphate biosynthesis; 1-deoxy-D-xylulose 5-phosphate from D-glyceraldehyde 3-phosphate and pyruvate: step 1/1. Functionally, catalyzes the acyloin condensation reaction between C atoms 2 and 3 of pyruvate and glyceraldehyde 3-phosphate to yield 1-deoxy-D-xylulose-5-phosphate (DXP). This chain is 1-deoxy-D-xylulose-5-phosphate synthase, found in Prochlorococcus marinus (strain MIT 9515).